Reading from the N-terminus, the 206-residue chain is Transcriptional regulator GfcR (206 aa).

Belongs to the purine/pyrimidine phosphoribosyltransferase family. GfcR subfamily.

This is Transcriptional regulator GfcR from Methanosphaerula palustris (strain ATCC BAA-1556 / DSM 19958 / E1-9c).